Here is a 128-residue protein sequence, read N- to C-terminus: CD59 glycoprotein (128 aa).

Residues 1–25 (MGIQGGSVLFGLLLVLAVFCHSGHS) form the signal peptide. The UPAR/Ly6 domain occupies 26-108 (LQCYNCPNPT…QLENGGTSLS (83 aa)). 5 cysteine pairs are disulfide-bonded: Cys-28-Cys-51, Cys-31-Cys-38, Cys-44-Cys-64, Cys-70-Cys-88, and Cys-89-Cys-94. N-linked (GlcNAc...) asparagine glycosylation is present at Asn-43. A lipid anchor (GPI-anchor amidated asparagine) is attached at Asn-102. Residues 103–128 (GGTSLSEKTVVLLVTLLLAAAWCLHP) constitute a propeptide, removed in mature form.

In terms of assembly, interacts with T-cell surface antigen CD2. N- and O-glycosylated.

The protein localises to the cell membrane. It localises to the secreted. In terms of biological role, potent inhibitor of the complement membrane attack complex (MAC) action, which protects self-cells from damage during complement activation. Acts by binding to the beta-haipins of C8 (C8A and C8B) components of the assembling MAC, forming an intermolecular beta-sheet that prevents incorporation of the multiple copies of C9 required for complete formation of the osmolytic pore. The protein is CD59 glycoprotein of Chlorocebus aethiops (Green monkey).